The sequence spans 139 residues: Large ribosomal subunit protein uL16 (139 aa).

The protein belongs to the universal ribosomal protein uL16 family. Part of the 50S ribosomal subunit.

In terms of biological role, binds 23S rRNA and is also seen to make contacts with the A and possibly P site tRNAs. This Picosynechococcus sp. (strain ATCC 27264 / PCC 7002 / PR-6) (Agmenellum quadruplicatum) protein is Large ribosomal subunit protein uL16.